A 376-amino-acid polypeptide reads, in one-letter code: N-acetyldiaminopimelate deacetylase (376 aa).

D69 is a catalytic residue. E128 functions as the Proton acceptor in the catalytic mechanism.

This sequence belongs to the peptidase M20A family. N-acetyldiaminopimelate deacetylase subfamily.

It carries out the reaction N-acetyl-(2S,6S)-2,6-diaminopimelate + H2O = (2S,6S)-2,6-diaminopimelate + acetate. The protein operates within amino-acid biosynthesis; L-lysine biosynthesis via DAP pathway; LL-2,6-diaminopimelate from (S)-tetrahydrodipicolinate (acetylase route): step 3/3. In terms of biological role, catalyzes the conversion of N-acetyl-diaminopimelate to diaminopimelate and acetate. The polypeptide is N-acetyldiaminopimelate deacetylase (Bacillus cereus (strain G9842)).